Here is a 291-residue protein sequence, read N- to C-terminus: Tobamovirus multiplication protein 1 (291 aa).

At 1–3 (MTD) the chain is on the cytoplasmic side. The helical transmembrane segment at 4–24 (SGLMMPAEIAGILTTAITSWW) threads the bilayer. Topologically, residues 25–36 (DDVNESTQWQDG) are extracellular. Asparagine 28 is a glycosylation site (N-linked (GlcNAc...) asparagine). Residues 37 to 57 (IFFALCGAYALVSAVALVQLI) form a helical membrane-spanning segment. Topologically, residues 58–78 (RIQMRVPEYGWTTQKVFHLMN) are cytoplasmic. A helical membrane pass occupies residues 79–99 (FVVNGVRAVLFGFHMQVFLVH). Residues 100–104 (PKALC) are Extracellular-facing. Residues 105–125 (WVLLDLPGLLFFSAYTLLVLF) form a helical membrane-spanning segment. The Cytoplasmic portion of the chain corresponds to 126-144 (WAEIYHQARSLPTDKLRIT). Residues 145-165 (YISVNVAVYLAQIGIWAYIWV) traverse the membrane as a helical segment. Topologically, residues 166-172 (HDNSTVE) are extracellular. Asparagine 168 carries N-linked (GlcNAc...) asparagine glycosylation. Residues 173-193 (LVGKIFIAVVSFIAALGFLLY) form a helical membrane-spanning segment. At 194 to 220 (GGRLFFMLRRFPIESKGRRKKLHEVGS) the chain is on the cytoplasmic side. A helical membrane pass occupies residues 221–241 (VTAICFTCFLIRCVVVAVSAF). Topologically, residues 242–253 (DKDLTLDVLDHP) are extracellular. The chain crosses the membrane as a helical span at residues 254-274 (VLNLIYYMVVEVLPSALVLFI). At 275–291 (LRKLPPKRVSAQYHPIQ) the chain is on the cytoplasmic side.

This sequence belongs to the plant tobamovirus multiplication TOM1 protein family. Constituent of tobamovirus replication complex. Interacts with TOM2A and with the helicase domain of tobamovirus-encoded replication proteins.

The protein resides in the vacuole membrane. In terms of biological role, necessary for the efficient intracellular multiplication of tobamoviruses, probably being a membrane anchor promoting the formation of the replication complex. This is Tobamovirus multiplication protein 1 (TOM1) from Arabidopsis thaliana (Mouse-ear cress).